The chain runs to 95 residues: Protein RL5A (95 aa).

The sequence is that of Protein RL5A (RL5A) from Homo sapiens (Human).